The chain runs to 572 residues: uncharacterized protein (572 aa).

The interval 553–572 (PSPAPKPVTVRKKKGNSPIS) is disordered. Over residues 561 to 572 (TVRKKKGNSPIS) the composition is skewed to basic residues.

This is an uncharacterized protein from Homo sapiens (Human).